A 452-amino-acid polypeptide reads, in one-letter code: Ribosomal protein uS12 methylthiotransferase RimO (452 aa).

The MTTase N-terminal domain maps to 3–118 (GKIGFVSLGC…VMQVIHLHLP (116 aa)). The [4Fe-4S] cluster site is built by Cys-12, Cys-48, Cys-77, Cys-149, Cys-153, and Cys-156. Positions 135-382 (LTPKHYAYLK…AKAEEISVGR (248 aa)) constitute a Radical SAM core domain. The region spanning 384–452 (AKKIGKRLQV…SQGHDLIAET (69 aa)) is the TRAM domain.

The protein belongs to the methylthiotransferase family. RimO subfamily. [4Fe-4S] cluster is required as a cofactor.

The protein resides in the cytoplasm. The catalysed reaction is L-aspartate(89)-[ribosomal protein uS12]-hydrogen + (sulfur carrier)-SH + AH2 + 2 S-adenosyl-L-methionine = 3-methylsulfanyl-L-aspartate(89)-[ribosomal protein uS12]-hydrogen + (sulfur carrier)-H + 5'-deoxyadenosine + L-methionine + A + S-adenosyl-L-homocysteine + 2 H(+). In terms of biological role, catalyzes the methylthiolation of an aspartic acid residue of ribosomal protein uS12. The polypeptide is Ribosomal protein uS12 methylthiotransferase RimO (Polynucleobacter necessarius subsp. necessarius (strain STIR1)).